Here is a 327-residue protein sequence, read N- to C-terminus: Methionyl-tRNA formyltransferase (327 aa).

Residue 122–125 coordinates (6S)-5,6,7,8-tetrahydrofolate; that stretch reads SLLP.

The protein belongs to the Fmt family.

It catalyses the reaction L-methionyl-tRNA(fMet) + (6R)-10-formyltetrahydrofolate = N-formyl-L-methionyl-tRNA(fMet) + (6S)-5,6,7,8-tetrahydrofolate + H(+). In terms of biological role, attaches a formyl group to the free amino group of methionyl-tRNA(fMet). The formyl group appears to play a dual role in the initiator identity of N-formylmethionyl-tRNA by promoting its recognition by IF2 and preventing the misappropriation of this tRNA by the elongation apparatus. The protein is Methionyl-tRNA formyltransferase of Ralstonia pickettii (strain 12J).